Consider the following 95-residue polypeptide: Small ribosomal subunit protein bS6 (95 aa).

The protein belongs to the bacterial ribosomal protein bS6 family.

Binds together with bS18 to 16S ribosomal RNA. The polypeptide is Small ribosomal subunit protein bS6 (Clostridium acetobutylicum (strain ATCC 824 / DSM 792 / JCM 1419 / IAM 19013 / LMG 5710 / NBRC 13948 / NRRL B-527 / VKM B-1787 / 2291 / W)).